An 86-amino-acid polypeptide reads, in one-letter code: Small ribosomal subunit protein uS15 (86 aa).

Positions M1 to P22 are disordered. Basic and acidic residues predominate over residues K7–A16.

This sequence belongs to the universal ribosomal protein uS15 family. In terms of assembly, part of the 30S ribosomal subunit. Forms a bridge to the 50S subunit in the 70S ribosome, contacting the 23S rRNA.

Its function is as follows. One of the primary rRNA binding proteins, it binds directly to 16S rRNA where it helps nucleate assembly of the platform of the 30S subunit by binding and bridging several RNA helices of the 16S rRNA. In terms of biological role, forms an intersubunit bridge (bridge B4) with the 23S rRNA of the 50S subunit in the ribosome. The polypeptide is Small ribosomal subunit protein uS15 (Xanthomonas axonopodis pv. citri (strain 306)).